The following is a 107-amino-acid chain: Putative double-stranded DNA mimic protein CGSHiGG_01135 (107 aa).

This sequence belongs to the putative dsDNA mimic protein family.

May act as a double-stranded DNA (dsDNA) mimic. Probably regulates the activity of a dsDNA-binding protein. The protein is Putative double-stranded DNA mimic protein CGSHiGG_01135 of Haemophilus influenzae (strain PittGG).